The chain runs to 355 residues: Uroporphyrinogen decarboxylase (355 aa).

Residues 27–31, aspartate 78, tyrosine 155, serine 210, and histidine 328 contribute to the substrate site; that span reads RQAGR.

Belongs to the uroporphyrinogen decarboxylase family. In terms of assembly, homodimer.

The protein resides in the cytoplasm. The catalysed reaction is uroporphyrinogen III + 4 H(+) = coproporphyrinogen III + 4 CO2. It functions in the pathway porphyrin-containing compound metabolism; protoporphyrin-IX biosynthesis; coproporphyrinogen-III from 5-aminolevulinate: step 4/4. In terms of biological role, catalyzes the decarboxylation of four acetate groups of uroporphyrinogen-III to yield coproporphyrinogen-III. This chain is Uroporphyrinogen decarboxylase, found in Pseudomonas paraeruginosa (strain DSM 24068 / PA7) (Pseudomonas aeruginosa (strain PA7)).